A 57-amino-acid chain; its full sequence is Plasma membrane proteolipid 3 (57 aa).

The helical transmembrane segment at 34–54 (INILLTILGYLPGIVHALYII) threads the bilayer.

Belongs to the UPF0057 (PMP3) family.

The protein resides in the cell membrane. Its function is as follows. Plays a role in the regulation of membrane potential. Could mediate a proton leak. This is Plasma membrane proteolipid 3 (pmp-1) from Neurospora crassa (strain ATCC 24698 / 74-OR23-1A / CBS 708.71 / DSM 1257 / FGSC 987).